The following is a 274-amino-acid chain: Thiamine kinase (274 aa).

This sequence belongs to the thiamine kinase family.

It catalyses the reaction thiamine + ATP = thiamine phosphate + ADP + H(+). It participates in cofactor biosynthesis; thiamine diphosphate biosynthesis; thiamine phosphate from thiamine: step 1/1. Functionally, catalyzes the ATP-dependent phosphorylation of thiamine to thiamine phosphate. Is involved in thiamine salvage. This chain is Thiamine kinase, found in Salmonella typhimurium (strain LT2 / SGSC1412 / ATCC 700720).